The following is an 823-amino-acid chain: Ankyrin repeat domain-containing protein 20A1 (823 aa).

ANK repeat units follow at residues 66–95 (QHRT…QIDV), 99–128 (ENRT…NPNL), 132–161 (YGNT…HIEA), 165–194 (DNNT…SSHA), and 198–227 (LRRS…DVFA). Disordered regions lie at residues 301-343 (VPEK…EVED) and 355-402 (VQTL…LSEN). The span at 372–384 (QERHERSEKKQPQ) shows a compositional bias: basic and acidic residues. 3 coiled-coil regions span residues 431–480 (KKLK…KQLE), 565–724 (EMIT…NNST), and 776–805 (LVLE…EKTE).

The protein is Ankyrin repeat domain-containing protein 20A1 (ANKRD20A1) of Homo sapiens (Human).